The primary structure comprises 538 residues: CTP synthase (538 aa).

Residues 1 to 266 (MKTKFIFVTG…DDQVVDKLNI (266 aa)) form an amidoligase domain region. Ser-14 lines the CTP pocket. Ser-14 is a UTP binding site. ATP contacts are provided by residues 15 to 20 (SIGKGL) and Asp-72. Positions 72 and 140 each coordinate Mg(2+). CTP contacts are provided by residues 147–149 (DIE), 187–192 (KTKPTQ), and Lys-223. UTP-binding positions include 187–192 (KTKPTQ) and Lys-223. The Glutamine amidotransferase type-1 domain occupies 292-534 (HIAIVGKYVN…IAAALEHRGK (243 aa)). Gly-354 serves as a coordination point for L-glutamine. Cys-381 serves as the catalytic Nucleophile; for glutamine hydrolysis. L-glutamine-binding positions include 382–385 (LGMQ), Glu-405, and Arg-462. Catalysis depends on residues His-507 and Glu-509.

This sequence belongs to the CTP synthase family. Homotetramer.

It carries out the reaction UTP + L-glutamine + ATP + H2O = CTP + L-glutamate + ADP + phosphate + 2 H(+). It catalyses the reaction L-glutamine + H2O = L-glutamate + NH4(+). The enzyme catalyses UTP + NH4(+) + ATP = CTP + ADP + phosphate + 2 H(+). Its pathway is pyrimidine metabolism; CTP biosynthesis via de novo pathway; CTP from UDP: step 2/2. With respect to regulation, allosterically activated by GTP, when glutamine is the substrate; GTP has no effect on the reaction when ammonia is the substrate. The allosteric effector GTP functions by stabilizing the protein conformation that binds the tetrahedral intermediate(s) formed during glutamine hydrolysis. Inhibited by the product CTP, via allosteric rather than competitive inhibition. Functionally, catalyzes the ATP-dependent amination of UTP to CTP with either L-glutamine or ammonia as the source of nitrogen. Regulates intracellular CTP levels through interactions with the four ribonucleotide triphosphates. The chain is CTP synthase from Geobacter metallireducens (strain ATCC 53774 / DSM 7210 / GS-15).